A 57-amino-acid polypeptide reads, in one-letter code: UPF0391 membrane protein RPB_2510 (57 aa).

Helical transmembrane passes span 6-26 (WALI…TGIS) and 35-55 (ILFY…FTIF).

The protein belongs to the UPF0391 family.

Its subcellular location is the cell membrane. The polypeptide is UPF0391 membrane protein RPB_2510 (Rhodopseudomonas palustris (strain HaA2)).